A 686-amino-acid polypeptide reads, in one-letter code: Ovotransferrin (686 aa).

Transferrin-like domains lie at 7–333 and 345–670; these read VRWC…SLRK and IQWC…SLNT. 6 cysteine pairs are disulfide-bonded: Cys-10–Cys-45, Cys-20–Cys-36, Cys-115–Cys-197, Cys-160–Cys-174, Cys-171–Cys-182, and Cys-228–Cys-242. The connecting region stretch occupies residues 333–341; it reads KDQLTVGPR. 9 disulfide bridges follow: Cys-348-Cys-380, Cys-358-Cys-371, Cys-405-Cys-680, Cys-421-Cys-643, Cys-454-Cys-530, Cys-478-Cys-671, Cys-488-Cys-502, Cys-499-Cys-513, and Cys-570-Cys-584. N-linked (GlcNAc...) asparagine glycosylation occurs at Asn-473. Asn-548 is a glycosylation site (N-linked (GlcNAc...) asparagine).

The protein belongs to the transferrin family. Monomer.

It is found in the secreted. Functionally, transferrins are iron binding transport proteins which can bind two Fe(3+) ions in association with the binding of an anion, usually bicarbonate. It is responsible for the transport of iron from sites of absorption and heme degradation to those of storage and utilization. Serum transferrin may also have a further role in stimulating cell proliferation. In terms of biological role, ovotransferrin has a bacteriostatic function. Its concentration in avian egg is the highest concentration of any transferrin in vivo. The protein is Ovotransferrin of Anas platyrhynchos (Mallard).